Here is a 363-residue protein sequence, read N- to C-terminus: S-adenosylmethionine:tRNA ribosyltransferase-isomerase (363 aa).

It belongs to the QueA family. Monomer.

It is found in the cytoplasm. It catalyses the reaction 7-aminomethyl-7-carbaguanosine(34) in tRNA + S-adenosyl-L-methionine = epoxyqueuosine(34) in tRNA + adenine + L-methionine + 2 H(+). It functions in the pathway tRNA modification; tRNA-queuosine biosynthesis. Its function is as follows. Transfers and isomerizes the ribose moiety from AdoMet to the 7-aminomethyl group of 7-deazaguanine (preQ1-tRNA) to give epoxyqueuosine (oQ-tRNA). The polypeptide is S-adenosylmethionine:tRNA ribosyltransferase-isomerase (Synechococcus sp. (strain RCC307)).